Reading from the N-terminus, the 814-residue chain is MEDGFSSYSSLYDTSSLLQFCNDDSASAASSMEVSDRIASLEQRVQMQEDDIQLLKSALADVVRRLNITEEQQAVLNRKGPTKARPLGQTLPLRTTVNNGTVLPKKPSASLPAPSGARKEVVVPVTKSINRTSSSERVSPGGRRESSGDSKGSRNRTGSTSSSSSGKKNSESKPKEPAFSPEEGYVKMFLRGRPVTMYMPKDQVDSYSLEAKAELPTKRLKLEWVYGYRGRDCRNNLYLLPTGETVYFIASVVVLYNVEEQLQRHYAGHNDDVKCLAVHPDRITIATGQVAGTSKDGKQLPPHVRIWDSVTLNTLHVIGIGFFDRAVTCIAFSKSNGGGHLCAVDDSNDHVLSVWDWQKEERLADVKCSNEAVFAADFHPTDTNIIVTCGKSHLYFWTLEGNSLNKKQGLFEKQEKPKFVLCVTFSENGDTITGDSSGNILVWGKGTNRISYAVQGAHEGGIFALCMLRDGTLVSGGGKDRRLISWNGNYQKLHKAEIPEQFGPIRTVAEGKGNVILIGTTRNFVLQGTLSGDFTPITQGHTDELWGLAIHASKPQFLTCGHDKHATLWDAVGHRPVWDKIIEDPAQSSGFHPSGSVVAVGTLTGRWFVFDTETKDLVTVHTDGNEQLSVMRYSPDGNFLAIGSHDNCIYIYGVTDNGRKYTRVGKCSGHSSFITHLDWSVNSQFLVSNSGDYEILYWVPSACKQVVSVETTRDIEWATYTCTLGFHVFGVWPEGSDGTDINAVCRAHERKLLCTGDDFGKVHLFSYPCSQFRAPSHIYSGHSSHVTNVDFLCEDSHLISTGGKDTSIMQWRVI.

Residues 31-72 (SMEVSDRIASLEQRVQMQEDDIQLLKSALADVVRRLNITEEQ) are a coiled coil. Residues 77 to 180 (NRKGPTKARP…ESKPKEPAFS (104 aa)) are disordered. Over residues 92–101 (PLRTTVNNGT) the composition is skewed to polar residues. Over residues 103-115 (LPKKPSASLPAPS) the composition is skewed to low complexity. The span at 127–137 (KSINRTSSSER) shows a compositional bias: polar residues. A compositionally biased stretch (basic and acidic residues) spans 142 to 152 (GRRESSGDSKG). Positions 155-167 (NRTGSTSSSSSGK) are enriched in low complexity. Residues 175 to 814 (KEPAFSPEEG…DTSIMQWRVI (640 aa)) form a tandem atypical propeller in EMLs region. WD repeat units lie at residues 260–309 (EQLQ…IWDS), 314–357 (TLHV…VWDW), 362–399 (RLAD…FWTL), 408–445 (QGLF…VWGK), 449–488 (RISY…SWNG), 492–529 (KLHK…LQGT), 534–571 (FTPI…LWDA), 577–612 (VWDK…VFDT), 616–654 (DLVT…IYGV), 663–700 (RVGK…YWVP), 708–767 (SVET…LFSY), and 774–813 (APSH…QWRV).

It belongs to the WD repeat EMAP family. As to quaternary structure, homotrimer; self-association is mediated by the N-terminal coiled coil. Does not interact with EML3. Binds unpolymerized tubulins via its WD repeat region. Binds repolymerizing microtubules. Interacts with TASOR. In terms of tissue distribution, detected in adult brain cortex, hippocampus and thalamus. Expressed in the stomach, lungs and in Sertoli cells of the testis.

It is found in the cytoplasm. It localises to the perinuclear region. The protein resides in the cytoskeleton. Modulates the assembly and organization of the microtubule cytoskeleton, and probably plays a role in regulating the orientation of the mitotic spindle and the orientation of the plane of cell division. Required for normal proliferation of neuronal progenitor cells in the developing brain and for normal brain development. Does not affect neuron migration per se. The sequence is that of Echinoderm microtubule-associated protein-like 1 (Eml1) from Mus musculus (Mouse).